The chain runs to 708 residues: Potassium-transporting ATPase ATP-binding subunit 2 (708 aa).

The tract at residues Met1 to Met23 is disordered. A compositionally biased stretch (basic and acidic residues) spans Leu7–Met23. The next 4 membrane-spanning stretches (helical) occupy residues Met49 to Phe69, Gly84 to Ala104, Ile235 to Met255, and Ser283 to Leu303. Asp339 (4-aspartylphosphate intermediate) is an active-site residue. Residues Asp376, Glu380, Phe407 to Ser414, and Lys426 contribute to the ATP site. Asp549 and Asp553 together coordinate Mg(2+). Helical transmembrane passes span Phe619 to Leu639, Ala645 to Leu665, and Ile683 to Val703.

This sequence belongs to the cation transport ATPase (P-type) (TC 3.A.3) family. Type IA subfamily. In terms of assembly, the system is composed of three essential subunits: KdpA, KdpB and KdpC.

Its subcellular location is the cell inner membrane. It carries out the reaction K(+)(out) + ATP + H2O = K(+)(in) + ADP + phosphate + H(+). Functionally, part of the high-affinity ATP-driven potassium transport (or Kdp) system, which catalyzes the hydrolysis of ATP coupled with the electrogenic transport of potassium into the cytoplasm. This subunit is responsible for energy coupling to the transport system and for the release of the potassium ions to the cytoplasm. The protein is Potassium-transporting ATPase ATP-binding subunit 2 of Nostoc sp. (strain PCC 7120 / SAG 25.82 / UTEX 2576).